The following is a 119-amino-acid chain: Neuropeptide B (119 aa).

Positions 1 to 21 (MVRCRTLVAAALALLLTPALA) are cleaved as a signal peptide. Residues 53-119 (SESPALRVGT…SLHKAECQSA (67 aa)) constitute a propeptide that is removed on maturation.

Belongs to the neuropeptide B/W family. Detected in a variety of tissues. High levels are found in the lymphoid organs, central nervous system, mammary gland and uterus.

The protein resides in the secreted. In terms of biological role, may be involved in the regulation of feeding, neuroendocrine system, memory and learning. May be involved in the afferent pain pathway. The sequence is that of Neuropeptide B (Npb) from Rattus norvegicus (Rat).